The chain runs to 520 residues: Pleckstrin homology domain-containing family A member 8 (520 aa).

One can recognise a PH domain in the interval 1–93 (MEGVLYKWTN…WLVALGSAKA (93 aa)). Threonine 139 carries the phosphothreonine modification. Serine 145 is subject to Phosphoserine. At threonine 153 the chain carries Phosphothreonine. A compositionally biased stretch (basic and acidic residues) spans 275–285 (GEESLGNHDSD). Residues 275-305 (GEESLGNHDSDLAQPELHSTSSSPESHWEED) are disordered. Residues 311-520 (TFFSTMNTSF…VHGLESDEVV (210 aa)) form a glycolipid transfer protein homology domain region.

As to quaternary structure, homodimer. Interacts with ARF1; the interaction together with phosphatidylinositol 4-phosphate binding is required for FAPP2 GlcCer transfer ability.

The protein localises to the cytoplasm. It is found in the golgi apparatus. It localises to the trans-Golgi network membrane. The protein resides in the membrane. Functionally, cargo transport protein that is required for apical transport from the trans-Golgi network (TGN). Transports AQP2 from the trans-Golgi network (TGN) to sites of AQP2 phosphorylation. Mediates the non-vesicular transport of glucosylceramide (GlcCer) from the trans-Golgi network (TGN) to the plasma membrane and plays a pivotal role in the synthesis of complex glycosphingolipids. Binding of both phosphatidylinositol 4-phosphate (PIP) and ARF1 are essential for the GlcCer transfer ability. Also required for primary cilium formation, possibly by being involved in the transport of raft lipids to the apical membrane, and for membrane tubulation. In Bos taurus (Bovine), this protein is Pleckstrin homology domain-containing family A member 8 (PLEKHA8).